The sequence spans 434 residues: DNA primase DnaG (434 aa).

Residues 171-250 form the Toprim domain; the sequence is DAIIIVEGRA…AFSPRRRSVE (80 aa). Residues E177, D219, and D221 each coordinate Mg(2+). The segment at 290–319 is disordered; sequence GEEEHSSVSQKEEGNNTTPDVPADLPEEPP. Residues 292 to 303 are compositionally biased toward basic and acidic residues; sequence EEHSSVSQKEEG.

The protein belongs to the archaeal DnaG primase family. As to quaternary structure, forms a ternary complex with MCM helicase and DNA. The cofactor is Mg(2+).

It catalyses the reaction ssDNA + n NTP = ssDNA/pppN(pN)n-1 hybrid + (n-1) diphosphate.. Its function is as follows. RNA polymerase that catalyzes the synthesis of short RNA molecules used as primers for DNA polymerase during DNA replication. This chain is DNA primase DnaG, found in Methanocorpusculum labreanum (strain ATCC 43576 / DSM 4855 / Z).